Here is a 251-residue protein sequence, read N- to C-terminus: Eukaryotic translation initiation factor 3 subunit K (251 aa).

One can recognise a PCI domain in the interval 46 to 224; it reads FDCYANLALL…VKVPTNKENE (179 aa).

It belongs to the eIF-3 subunit K family. In terms of assembly, component of the eukaryotic translation initiation factor 3 (eIF-3) complex.

It localises to the cytoplasm. Its function is as follows. Component of the eukaryotic translation initiation factor 3 (eIF-3) complex, which is involved in protein synthesis of a specialized repertoire of mRNAs and, together with other initiation factors, stimulates binding of mRNA and methionyl-tRNAi to the 40S ribosome. The eIF-3 complex specifically targets and initiates translation of a subset of mRNAs involved in cell proliferation. In Aspergillus oryzae (strain ATCC 42149 / RIB 40) (Yellow koji mold), this protein is Eukaryotic translation initiation factor 3 subunit K.